The chain runs to 156 residues: Small ribosomal subunit protein uS7 (156 aa).

Belongs to the universal ribosomal protein uS7 family. As to quaternary structure, part of the 30S ribosomal subunit. Contacts proteins S9 and S11.

In terms of biological role, one of the primary rRNA binding proteins, it binds directly to 16S rRNA where it nucleates assembly of the head domain of the 30S subunit. Is located at the subunit interface close to the decoding center, probably blocks exit of the E-site tRNA. The sequence is that of Small ribosomal subunit protein uS7 from Coprothermobacter proteolyticus (strain ATCC 35245 / DSM 5265 / OCM 4 / BT).